The following is a 383-amino-acid chain: NAD(P) transhydrogenase subunit alpha part 1 (383 aa).

Residues 131 to 134 (QNMD), valine 181, 201 to 203 (DVR), and glycine 231 each bind NAD(+).

The protein belongs to the AlaDH/PNT family. Heterotrimer of two alpha chains and a beta (PntB) chain; in Rickettsia, the alpha chain is made of two subunits (PntAA and PntAB) and forms a dimer.

The catalysed reaction is NAD(+) + NADPH + H(+)(in) = NADH + NADP(+) + H(+)(out). Functionally, the transhydrogenation between NADH and NADP is coupled to respiration and ATP hydrolysis and functions as a proton pump across the membrane. The polypeptide is NAD(P) transhydrogenase subunit alpha part 1 (pntAA) (Rickettsia prowazekii (strain Madrid E)).